The chain runs to 168 residues: Gastrula zinc finger protein XlCGF7.1 (168 aa).

6 C2H2-type zinc fingers span residues 6 to 28, 34 to 56, 62 to 84, 90 to 112, 118 to 140, and 146 to 168; these read FTCTECGKGFSDKSNLRSHQRTH, FTCTECGKSFSQKIGLHNHLKCH, FMCTECGKSFSNKSNLHTHRKIH, YICTECGKTFPRKKNLQSHQTVH, FTCSECGKCFSQKKNLHTHQKIH, and FKCNECGQAFLRKRNLLSHERIH.

The protein belongs to the krueppel C2H2-type zinc-finger protein family.

The protein localises to the nucleus. May be involved in transcriptional regulation. This is Gastrula zinc finger protein XlCGF7.1 from Xenopus laevis (African clawed frog).